Here is a 236-residue protein sequence, read N- to C-terminus: Purine nucleoside phosphorylase DeoD-type (236 aa).

Residue His4 coordinates a purine D-ribonucleoside. Phosphate-binding positions include Gly20, Arg24, Arg43, and 87–90; that span reads RVGT. A purine D-ribonucleoside contacts are provided by residues 178 to 180 and 202 to 203; these read EME and SD. The active-site Proton donor is Asp203.

Belongs to the PNP/UDP phosphorylase family. Homohexamer; trimer of homodimers.

It catalyses the reaction a purine D-ribonucleoside + phosphate = a purine nucleobase + alpha-D-ribose 1-phosphate. The catalysed reaction is a purine 2'-deoxy-D-ribonucleoside + phosphate = a purine nucleobase + 2-deoxy-alpha-D-ribose 1-phosphate. Catalyzes the reversible phosphorolytic breakdown of the N-glycosidic bond in the beta-(deoxy)ribonucleoside molecules, with the formation of the corresponding free purine bases and pentose-1-phosphate. This Geobacillus kaustophilus (strain HTA426) protein is Purine nucleoside phosphorylase DeoD-type.